Reading from the N-terminus, the 421-residue chain is Testin (421 aa).

A PET domain is found at 92–199 (MILTNPVAAK…GDVKLPRDMN (108 aa)). Disordered stretches follow at residues 133–164 (EKQPVAGSEGAQYRKKQLAKQLPAHDQDPSKC) and 193–213 (KLPRDMNTQGPNKMYIPGGDR). Basic and acidic residues predominate over residues 155–164 (PAHDQDPSKC). LIM zinc-binding domains lie at 234-297 (YSCY…CDSE), 299-359 (PRCA…NHAV), and 362-421 (QGCH…KMMS).

The protein belongs to the prickle / espinas / testin family. Interacts via LIM domain 1 with ZYX. Interacts (via LIM domain 3) with ENAH and VASP. Interacts with ALKBH4, talin, actin, alpha-actinin, GRIP1 and PXN. Interacts (via LIM domain 2) with ACTL7A (via N-terminus). Heterodimer with ACTL7A; the heterodimer interacts with ENAH to form a heterotrimer.

It is found in the cytoplasm. Its subcellular location is the cell junction. The protein localises to the focal adhesion. Scaffold protein that may play a role in cell adhesion, cell spreading and in the reorganization of the actin cytoskeleton. Plays a role in the regulation of cell proliferation. May act as a tumor suppressor. This chain is Testin (TES), found in Ovis aries (Sheep).